A 241-amino-acid polypeptide reads, in one-letter code: Putative hydrolase 080R (241 aa).

The region spanning 50–241 (FPDLSFNLMV…VIKVQKIMIL (192 aa)) is the Nudix hydrolase domain. The Nudix box signature appears at 136–157 (GHCNGNEPVLSTLLREFREETT). Residues Glu-151, Glu-155, and Asp-204 each coordinate Mg(2+).

Belongs to the Nudix hydrolase family.

This chain is Putative hydrolase 080R, found in Aedes vexans (Inland floodwater mosquito).